A 337-amino-acid polypeptide reads, in one-letter code: DNA-directed RNA polymerase subunit alpha (337 aa).

The interval 1-233 is alpha N-terminal domain (alpha-NTD); sequence MIQKNWQELI…DQLSIFVNFE (233 aa). Positions 249–337 are alpha C-terminal domain (alpha-CTD); sequence FNPALLKKVD…DLAKRYEDQY (89 aa).

It belongs to the RNA polymerase alpha chain family. In terms of assembly, homodimer. The RNAP catalytic core consists of 2 alpha, 1 beta, 1 beta' and 1 omega subunit. When a sigma factor is associated with the core the holoenzyme is formed, which can initiate transcription.

It carries out the reaction RNA(n) + a ribonucleoside 5'-triphosphate = RNA(n+1) + diphosphate. DNA-dependent RNA polymerase catalyzes the transcription of DNA into RNA using the four ribonucleoside triphosphates as substrates. The protein is DNA-directed RNA polymerase subunit alpha of Brucella melitensis biotype 2 (strain ATCC 23457).